Reading from the N-terminus, the 375-residue chain is Pulmonary surfactant-associated protein D (375 aa).

Residues 1–20 form the signal peptide; that stretch reads MLLFLLSALVLLTQPLGYLE. C35 and C40 each carry S-nitrosocysteine. A disordered region spans residues 45–221; the sequence is SGLPGRDGRD…DKGAKGESGL (177 aa). The Collagen-like domain occupies 46–222; the sequence is GLPGRDGRDG…KGAKGESGLP (177 aa). A compositionally biased stretch (basic and acidic residues) spans 50–65; that stretch reads RDGRDGREGPRGEKGD. Low complexity predominate over residues 66–86; the sequence is PGLPGAAGQAGMPGQAGPVGP. P78 carries the post-translational modification 4-hydroxyproline. At K87 the chain carries 5-hydroxylysine. N90 carries N-linked (GlcNAc...) asparagine glycosylation. P96 bears the 4-hydroxyproline mark. K99 is subject to 5-hydroxylysine. Positions 105-114 are enriched in pro residues; that stretch reads SGPPGPPGVP. Composition is skewed to low complexity over residues 116 to 132 and 138 to 150; these read PAGR…IGPQ and KGEA…VGAP. 4-hydroxyproline is present on residues P171 and P177. The segment covering 204–216 has biased composition (basic and acidic residues); sequence KGDKGIPGDKGAK. The stretch at 223–252 forms a coiled coil; sequence DVASLRQQVEALQGQVQHLQAAFSQYKKVE. The region spanning 260 to 375 is the C-type lectin domain; that stretch reads VGEKIFKTAG…GEKRLVVCEF (116 aa). Cystine bridges form between C281–C373 and C351–C365.

The protein belongs to the SFTPD family. As to quaternary structure, oligomeric complex of 4 set of homotrimers. In terms of processing, the N-terminus is blocked. Hydroxylation on proline residues within the sequence motif, GXPG, is most likely to be 4-hydroxy as this fits the requirement for 4-hydroxylation in vertebrates. Post-translationally, S-nitrosylation at Cys-35 and Cys-40 alters the quaternary structure which results in a pro-inflammatory chemoattractive signaling activity with macrophages. Expressed in lung, brain, pancreas and adipose tissue (mainly mature adipocytes).

The protein resides in the secreted. It is found in the extracellular space. It localises to the extracellular matrix. The protein localises to the surface film. Functionally, contributes to the lung's defense against inhaled microorganisms, organic antigens and toxins. Interacts with compounds such as bacterial lipopolysaccharides, oligosaccharides and fatty acids and modulates leukocyte action in immune response. May participate in the extracellular reorganization or turnover of pulmonary surfactant. Binds strongly maltose residues and to a lesser extent other alpha-glucosyl moieties. The polypeptide is Pulmonary surfactant-associated protein D (SFTPD) (Homo sapiens (Human)).